The chain runs to 148 residues: MTERPFWQQKTLSEMSDDEWESLCDGCGQCCLHKLIDEDTEEIYFTNVACNQLNIKSCQCRNYEKRFEYEPDCIKLTRENLLTFNWLPATCAYRLIHEREDLPQWHPLVCGTKTAMHRERISVRHIAVRETEVVDWQDHILNKPEWAR.

It belongs to the UPF0260 family.

The polypeptide is UPF0260 protein PC1_1943 (Pectobacterium carotovorum subsp. carotovorum (strain PC1)).